The chain runs to 772 residues: A type blood N-acetyl-alpha-D-galactosamine deacetylase (772 aa).

The first 27 residues, methionine 1 to alanine 27, serve as a signal peptide directing secretion. Residues serine 87 and histidine 123 each contribute to the substrate site. Aspartate 126 is an a divalent metal cation binding site. A deacetylase activity region spans residues tryptophan 180 to phenylalanine 402. A substrate-binding site is contributed by tyrosine 236. Histidine 278 serves as a coordination point for a divalent metal cation. The 112-residue stretch at serine 494–tryptophan 605 folds into the F5/8 type C domain. Residues valine 502 to aspartate 765 form a CBM32 carbohydrate-binding domain region. Residues threonine 515–glutamate 772 form a not required for activity on soluble substrates region.

The cofactor is a divalent metal cation.

It carries out the reaction an N-acetyl-alpha-D-galactosaminyl-(1-&gt;3)-[alpha-L-fucosyl-(1-&gt;2)]-beta-D-galactosyl derivative + H2O = an alpha-D-galactosaminyl-(1-&gt;3)-[alpha-L-fucosyl-(1-&gt;2)]-beta-D-galactosyl derivative + acetate. Its activity is regulated as follows. Inhibited by EDTA. Functionally, one of an enzyme pair that work together to convert the A antigen to the H antigen of the O blood type, which together release galactosamine. Catalyzes the first step in the conversion, generating the substrate for the subsequent enzyme (FpGalNase, AC P0DTR5). Works on many different A antigen subtypes. Glu-90 probably activates a nucleophilic water molecule to start the deacetylation reaction. This chain is A type blood N-acetyl-alpha-D-galactosamine deacetylase, found in Flavonifractor plautii (Fusobacterium plautii).